The following is a 709-amino-acid chain: MVEAIVEFDYQAQHDDELTISVGEVITNIRKEDGGWWEGQINGRRGLFPDNFVREIKKDMKKDLLSNKAPEKPMHDVSSGNALLSSETILRTNKRGERRRRRCQVAFSYLPQNDDELELKVGDIIEVVGEVEEGWWEGVLNGKTGMFPSNFIKELSGESDELGISQDEQLSKSRPEGFLPASLLPFPAHGAKGKTTFEGTILYRAAPGKTEGHRRYYSLRETTGSESDGGDSSSTKSEGANGTMATAAIQPKKVKGVGFGDIFKDKPIKLRPRSIEVENDFLPVEKTIGKKLPPATSTPDPSKTEMDSRTKTKDYCKVIFPYEAQNDDELTIKEGDIVTLINKDCIDVGWWEGELNGRRGVFPDNFVKLLPSDFDKEGNRPKKPPPPSAPVVKQGAGTTERKHEIKKIPPERPETLPNRTEEKERPEREPKLDLQKPSVPAIPPKKPRPPKTNSLNRPGALPPRRPERPVGPLTHTRGDSPKIDLAGSALSGILDKDLSDRSNDIDLEGFDSVISSTEKLSHPTTSRPKATGRRPPSQSLTSSSLSSPDIFDSPSPEEDKEEHISLAHRGIDVSKKTSKTVTISQVSDNKTSLPPKPGTMAAASSGPASLSSVASSPMSSSLGTAGQRASSPSLFSTEGKPKMEPAVSSQAAIEELKMQVRELRTIIETMKDQQKREIKQLLSELDEEKKIRLRLQMEVNDIKKALQSK.

SH3 domains are found at residues 1–58 (MVEA…EIKK) and 98–157 (RRRR…ELSG). Residues Ser156, Ser159, Ser227, and Ser274 each carry the phosphoserine modification. Over residues 221-239 (ETTGSESDGGDSSSTKSEG) the composition is skewed to low complexity. The tract at residues 221–242 (ETTGSESDGGDSSSTKSEGANG) is disordered. Disordered regions lie at residues 289–309 (GKKL…MDSR), 372–485 (SDFD…KIDL), and 511–650 (DSVI…VSSQ). Thr298 carries the phosphothreonine modification. The 62-residue stretch at 311–372 (KTKDYCKVIF…PDNFVKLLPS (62 aa)) folds into the SH3 3 domain. Residues 399–434 (TERKHEIKKIPPERPETLPNRTEEKERPEREPKLDL) show a composition bias toward basic and acidic residues. At Ser480 the chain carries Phosphoserine. The span at 513-528 (VISSTEKLSHPTTSRP) shows a compositional bias: polar residues. Positions 535–554 (PPSQSLTSSSLSSPDIFDSP) are enriched in low complexity. Residues Ser553, Ser555, and Ser565 each carry the phosphoserine modification. Residues 561–575 (EEHISLAHRGIDVSK) are compositionally biased toward basic and acidic residues. Over residues 579-592 (KTVTISQVSDNKTS) the composition is skewed to polar residues. A compositionally biased stretch (low complexity) spans 600-623 (MAAASSGPASLSSVASSPMSSSLG). Polar residues predominate over residues 627 to 636 (QRASSPSLFS). Position 631 is a phosphoserine (Ser631). Residues 646-708 (AVSSQAAIEE…VNDIKKALQS (63 aa)) adopt a coiled-coil conformation.

As to quaternary structure, can self-associate and form homotetramers. Interacts with CD2, F-actin capping protein, PIK3R3, GRB2, EGFR, MET, BLNK, MAP3K4, PDCD6IP, SPRY2, ARHGAP17, ARHGAP27, CRK, BCAR1, SOS1, ASAP1, ARAP3, HIP1R, SYNJ2, INPP5D and STAP1. Interacts with E3 ubiquitin-protein ligase CBL. Interacts with CBLB, but does not interact with CBLC. Two molecules of SH3KBP1 seem to bind through their respective SH3 1 domain to one molecule of CBLB. The interaction with CBL or CBLB and EGFR is increased upon EGF stimulation. The interaction with CBL is attenuated by PDCD6IP. Interacts (via SH3 domains) with ARAP1. The interaction is independent of EGF and does not affect ARAP1 GTPase-activating activity but is involved in regulating ubiquitination and endocytic trafficking of EGFR. ARAP1 competes with CBL for binding to SH3KBP1 and prevents interaction of CBL with SH3KBP1; this is likely to regulate SH3KBP1-mediated internalization of EGFR. Interacts through its proline-rich region with the SH3 domain of endophilins SH3GL1, SH3GL2 and SH3GL3. The SH3KBP1-endophilin complex seems to associate with a complex containing the phosphorylated receptor (EGFR or MET) and phosphorylated CBL. Probably associates with ASAP1 and phosphorylated EGFR. Probably part of a complex consisting of at least SH3KBP1, ASAP1 and ARAP3. Interacts with focal adhesion kinases PTK2/FAK1 and PTK2B/PYK2, probably as a dimer. Interacts with DAB2 and probably associates with chathrin through its interaction with DAB2. Part of a complex consisting of SH3KBP1, DAB2, and clathrin heavy chain. DAB2 and clathrin dissociate from SH3KBP1 following growth factor treatment, enabling interaction with CBL. Interacts with DDN and probably associates with MAGI2 through its interaction with DDN. Interacts with the SH3 domains of SRC tyrosine-protein kinases SRC, LCK, LYN, FGR, FYN and HCK. Interacts with TRADD, BIRC2, TRAF1, TRAF2 and TNFR1, and the association with a TNFR1-associated complex upon stimulation with TNF-alpha seems to be mediated by SRC. Probably part of a complex consisting of at least SH3KBP1, ASAP1 and ARAP3. Interacts (via SH3 domains) with SHKBP1 (via PXXXPR motifs). Interacts with ATX2. Interaction with CBL is abolished in the presence of SHKBP1. Interacts (via SH3 domains) with ZFP36 (via extreme C-terminal region). Interacts with MAP3K4; this interaction enhances the association with ZFP36. In terms of processing, monoubiquitinated by CBL and CBLB after EGF stimulation; probably on its C-terminus.

The protein resides in the cytoplasm. Its subcellular location is the cytoskeleton. The protein localises to the cytoplasmic vesicle membrane. It is found in the synapse. It localises to the synaptosome. The protein resides in the cell junction. Its subcellular location is the focal adhesion. Adapter protein involved in regulating diverse signal transduction pathways. Involved in the regulation of endocytosis and lysosomal degradation of ligand-induced receptor tyrosine kinases, including EGFR and MET/hepatocyte growth factor receptor, through an association with CBL and endophilins. The association with CBL, and thus the receptor internalization, may be inhibited by an interaction with PDCD6IP and/or SPRY2. Involved in regulation of ligand-dependent endocytosis of the IgE receptor. Attenuates phosphatidylinositol 3-kinase activity by interaction with its regulatory subunit. May be involved in regulation of cell adhesion; promotes the interaction between TTK2B and PDCD6IP. May be involved in the regulation of cellular stress response via the MAPK pathways through its interaction with MAP3K4. Is involved in modulation of tumor necrosis factor mediated apoptosis. Plays a role in the regulation of cell morphology and cytoskeletal organization. Required in the control of cell shape and migration. Has an essential role in the stimulation of B cell activation. This Mus musculus (Mouse) protein is SH3 domain-containing kinase-binding protein 1 (Sh3kbp1).